Here is a 78-residue protein sequence, read N- to C-terminus: Acyl carrier protein (78 aa).

Residues 2 to 77 (DDLFKKIQQL…DAYEFIKSQQ (76 aa)) enclose the Carrier domain. S37 carries the post-translational modification O-(pantetheine 4'-phosphoryl)serine.

This sequence belongs to the acyl carrier protein (ACP) family. In terms of processing, 4'-phosphopantetheine is transferred from CoA to a specific serine of apo-ACP by AcpS. This modification is essential for activity because fatty acids are bound in thioester linkage to the sulfhydryl of the prosthetic group.

The protein localises to the cytoplasm. Its pathway is lipid metabolism; fatty acid biosynthesis. Carrier of the growing fatty acid chain in fatty acid biosynthesis. The chain is Acyl carrier protein from Treponema denticola (strain ATCC 35405 / DSM 14222 / CIP 103919 / JCM 8153 / KCTC 15104).